Consider the following 183-residue polypeptide: Large ribosomal subunit protein bL32m (183 aa).

The Zn(2+) site is built by cysteine 99, cysteine 102, cysteine 112, and cysteine 115.

This sequence belongs to the bacterial ribosomal protein bL32 family. In terms of assembly, component of the mitochondrial large ribosomal subunit (mt-LSU).

Its subcellular location is the mitochondrion. Functionally, component of the mitochondrial large ribosomal subunit (mt-LSU). The mitochondrial ribosome (mitoribosome) is a large ribonucleoprotein complex responsible for the synthesis of proteins inside mitochondria. The sequence is that of Large ribosomal subunit protein bL32m (mrpl-32) from Caenorhabditis elegans.